Reading from the N-terminus, the 542-residue chain is Probable protein kinase UbiB (542 aa).

The Protein kinase domain occupies Asp123–Met505. ATP-binding positions include Leu129–Val137 and Lys156. The active-site Proton acceptor is Asp291. The helical transmembrane segment at Ile506 to Leu526 threads the bilayer.

This sequence belongs to the ABC1 family. UbiB subfamily.

The protein resides in the cell inner membrane. It functions in the pathway cofactor biosynthesis; ubiquinone biosynthesis [regulation]. Functionally, is probably a protein kinase regulator of UbiI activity which is involved in aerobic coenzyme Q (ubiquinone) biosynthesis. The polypeptide is Probable protein kinase UbiB (Haemophilus ducreyi (strain 35000HP / ATCC 700724)).